Reading from the N-terminus, the 271-residue chain is Thiazole synthase (271 aa).

Lys95 (schiff-base intermediate with DXP) is an active-site residue. Residues Gly156, 182 to 183, and 204 to 205 contribute to the 1-deoxy-D-xylulose 5-phosphate site; these read AG and NT.

The protein belongs to the ThiG family. As to quaternary structure, homotetramer. Forms heterodimers with either ThiH or ThiS.

It localises to the cytoplasm. The enzyme catalyses [ThiS sulfur-carrier protein]-C-terminal-Gly-aminoethanethioate + 2-iminoacetate + 1-deoxy-D-xylulose 5-phosphate = [ThiS sulfur-carrier protein]-C-terminal Gly-Gly + 2-[(2R,5Z)-2-carboxy-4-methylthiazol-5(2H)-ylidene]ethyl phosphate + 2 H2O + H(+). The protein operates within cofactor biosynthesis; thiamine diphosphate biosynthesis. In terms of biological role, catalyzes the rearrangement of 1-deoxy-D-xylulose 5-phosphate (DXP) to produce the thiazole phosphate moiety of thiamine. Sulfur is provided by the thiocarboxylate moiety of the carrier protein ThiS. In vitro, sulfur can be provided by H(2)S. This Yersinia pseudotuberculosis serotype O:1b (strain IP 31758) protein is Thiazole synthase.